The primary structure comprises 355 residues: MTTSLDTVETFGPTSYDDDMGLLCEKADVGALIAQFVPPLYSLVFMVGLLGNVVVVMILIKYRRLRIMTNIYLLNLAISDLLFLFTLPFWIHYVRERNWVFSHGMCKVLSGFYHTGLYSEIFFIILLTIDRYLAIVHAVFALRARTVTFGVVTSIVTWGLAVLAALPEFIFYGTEELFPETLCSAIYPQDTVYSWRHFHTLRMTILCLALPLLVMAICYTGIIKTLLRCPSKKKYKAIRLIFVIMAVFFIFWTPYNVAILISTYQSILFGPDCERSKHLDLFVLVTEVIAYSHCWVNPVIYAFVGERFRKYLRHFFHRHVLMHPGKYIPFLPSEKLERTSSVSPSTAEPELSIVF.

Residues 1 to 34 (MTTSLDTVETFGPTSYDDDMGLLCEKADVGALIA) lie on the Extracellular side of the membrane. A helical transmembrane segment spans residues 35–62 (QFVPPLYSLVFMVGLLGNVVVVMILIKY). The Cytoplasmic segment spans residues 63 to 72 (RRLRIMTNIY). A helical transmembrane segment spans residues 73–93 (LLNLAISDLLFLFTLPFWIHY). The Extracellular segment spans residues 94–107 (VRERNWVFSHGMCK). An intrachain disulfide couples cysteine 106 to cysteine 183. The helical transmembrane segment at 108 to 129 (VLSGFYHTGLYSEIFFIILLTI) threads the bilayer. The Cytoplasmic segment spans residues 130 to 146 (DRYLAIVHAVFALRART). Residues 147–171 (VTFGVVTSIVTWGLAVLAALPEFIF) traverse the membrane as a helical segment. At 172 to 203 (YGTEELFPETLCSAIYPQDTVYSWRHFHTLRM) the chain is on the extracellular side. A helical transmembrane segment spans residues 204 to 223 (TILCLALPLLVMAICYTGII). At 224-239 (KTLLRCPSKKKYKAIR) the chain is on the cytoplasmic side. A helical membrane pass occupies residues 240 to 264 (LIFVIMAVFFIFWTPYNVAILISTY). Residues 265-281 (QSILFGPDCERSKHLDL) are Extracellular-facing. Residues 282-305 (FVLVTEVIAYSHCWVNPVIYAFVG) traverse the membrane as a helical segment. Topologically, residues 306-355 (ERFRKYLRHFFHRHVLMHPGKYIPFLPSEKLERTSSVSPSTAEPELSIVF) are cytoplasmic.

This sequence belongs to the G-protein coupled receptor 1 family.

The protein localises to the cell membrane. Functionally, receptor for C-C type chemokine. Binds and responds to a variety of chemokines, including CCL11, CCL26, CCL7, CCL13, RANTES(CCL5) and CCL15. Subsequently transduces a signal by increasing the intracellular calcium ions level. In addition acts as a possible functional receptor for NARS1. The sequence is that of C-C chemokine receptor type 3 (CCR3) from Macaca fascicularis (Crab-eating macaque).